A 555-amino-acid chain; its full sequence is Synaptotagmin-14 (555 aa).

Residues 1–24 are Extracellular-facing; it reads MAIEGGERTCGVHELICIRKVSPE. Residues 25-47 traverse the membrane as a helical; Signal-anchor for type III membrane protein segment; sequence AVGFLSAVGVFIILMLLLFLYIN. Topologically, residues 48 to 555 are cytoplasmic; the sequence is KKFCFENVGG…VCRWHALLES (508 aa). Disordered stretches follow at residues 157-179 and 222-257; these read TPPL…HLSC and GYEE…DPEP. C2 domains lie at 260–379 and 415–550; these read KYGT…SLPV and SVPE…CRWH.

It belongs to the synaptotagmin family. In terms of assembly, homodimer. Can also form heterodimers. As to expression, highly expressed in fetal and adult brain tissue.

It is found in the membrane. May be involved in the trafficking and exocytosis of secretory vesicles in non-neuronal tissues. Is Ca(2+)-independent. In Homo sapiens (Human), this protein is Synaptotagmin-14 (SYT14).